Here is a 97-residue protein sequence, read N- to C-terminus: Citrate lyase acyl carrier protein (97 aa).

Serine 14 carries the post-translational modification O-(phosphoribosyl dephospho-coenzyme A)serine.

It belongs to the CitD family. As to quaternary structure, oligomer with a subunit composition of (alpha,beta,gamma)6.

It localises to the cytoplasm. Functionally, covalent carrier of the coenzyme of citrate lyase. This is Citrate lyase acyl carrier protein from Yersinia enterocolitica serotype O:8 / biotype 1B (strain NCTC 13174 / 8081).